A 203-amino-acid chain; its full sequence is Outer-membrane lipoprotein LolB (203 aa).

Positions 1–17 are cleaved as a signal peptide; it reads MNRLFRLLPLASLVLTA. A lipid anchor (N-palmitoyl cysteine) is attached at Cys18. The S-diacylglycerol cysteine moiety is linked to residue Cys18.

The protein belongs to the LolB family. Monomer.

It localises to the cell outer membrane. In terms of biological role, plays a critical role in the incorporation of lipoproteins in the outer membrane after they are released by the LolA protein. This Klebsiella pneumoniae subsp. pneumoniae (strain ATCC 700721 / MGH 78578) protein is Outer-membrane lipoprotein LolB.